The following is a 157-amino-acid chain: S-ribosylhomocysteine lyase 2 (157 aa).

Residues His-54, His-58, and Cys-124 each contribute to the Fe cation site.

This sequence belongs to the LuxS family. In terms of assembly, homodimer. It depends on Fe cation as a cofactor.

The catalysed reaction is S-(5-deoxy-D-ribos-5-yl)-L-homocysteine = (S)-4,5-dihydroxypentane-2,3-dione + L-homocysteine. Its function is as follows. Involved in the synthesis of autoinducer 2 (AI-2) which is secreted by bacteria and is used to communicate both the cell density and the metabolic potential of the environment. The regulation of gene expression in response to changes in cell density is called quorum sensing. Catalyzes the transformation of S-ribosylhomocysteine (RHC) to homocysteine (HC) and 4,5-dihydroxy-2,3-pentadione (DPD). The protein is S-ribosylhomocysteine lyase 2 of Lactobacillus delbrueckii subsp. bulgaricus (strain ATCC BAA-365 / Lb-18).